The following is a 518-amino-acid chain: Glutamate--cysteine ligase (518 aa).

It belongs to the glutamate--cysteine ligase type 1 family. Type 1 subfamily.

The catalysed reaction is L-cysteine + L-glutamate + ATP = gamma-L-glutamyl-L-cysteine + ADP + phosphate + H(+). The protein operates within sulfur metabolism; glutathione biosynthesis; glutathione from L-cysteine and L-glutamate: step 1/2. This is Glutamate--cysteine ligase from Shigella dysenteriae serotype 1 (strain Sd197).